The following is a 378-amino-acid chain: Probable tRNA sulfurtransferase (378 aa).

In terms of domain architecture, THUMP spans 51–153 (DANLEKLQYV…SDKTYLFSKT (103 aa)). ATP-binding positions include 171–172 (LM), 196–197 (SF), arginine 253, glycine 275, and glutamine 284.

It belongs to the ThiI family.

The protein resides in the cytoplasm. The enzyme catalyses [ThiI sulfur-carrier protein]-S-sulfanyl-L-cysteine + a uridine in tRNA + 2 reduced [2Fe-2S]-[ferredoxin] + ATP + H(+) = [ThiI sulfur-carrier protein]-L-cysteine + a 4-thiouridine in tRNA + 2 oxidized [2Fe-2S]-[ferredoxin] + AMP + diphosphate. It carries out the reaction [ThiS sulfur-carrier protein]-C-terminal Gly-Gly-AMP + S-sulfanyl-L-cysteinyl-[cysteine desulfurase] + AH2 = [ThiS sulfur-carrier protein]-C-terminal-Gly-aminoethanethioate + L-cysteinyl-[cysteine desulfurase] + A + AMP + 2 H(+). Its pathway is cofactor biosynthesis; thiamine diphosphate biosynthesis. Catalyzes the ATP-dependent transfer of a sulfur to tRNA to produce 4-thiouridine in position 8 of tRNAs, which functions as a near-UV photosensor. Also catalyzes the transfer of sulfur to the sulfur carrier protein ThiS, forming ThiS-thiocarboxylate. This is a step in the synthesis of thiazole, in the thiamine biosynthesis pathway. The sulfur is donated as persulfide by IscS. This Mycoplasmopsis agalactiae (strain NCTC 10123 / CIP 59.7 / PG2) (Mycoplasma agalactiae) protein is Probable tRNA sulfurtransferase.